A 329-amino-acid polypeptide reads, in one-letter code: Ketol-acid reductoisomerase (NADP(+)) (329 aa).

The KARI N-terminal Rossmann domain occupies 2–182 (TQLFYDTDAD…GGTRAGILET (181 aa)). Residues 25-28 (YGSQ), Ser51, Ser53, and 83-86 (DEFQ) each bind NADP(+). His108 is a catalytic residue. NADP(+) is bound at residue Gly134. The KARI C-terminal knotted domain occupies 183-328 (NFKEETETDL…KGLRSMFSWL (146 aa)). Asp191, Glu195, Glu227, and Glu231 together coordinate Mg(2+). Residue Ser252 participates in substrate binding.

It belongs to the ketol-acid reductoisomerase family. The cofactor is Mg(2+).

It catalyses the reaction (2R)-2,3-dihydroxy-3-methylbutanoate + NADP(+) = (2S)-2-acetolactate + NADPH + H(+). It carries out the reaction (2R,3R)-2,3-dihydroxy-3-methylpentanoate + NADP(+) = (S)-2-ethyl-2-hydroxy-3-oxobutanoate + NADPH + H(+). The protein operates within amino-acid biosynthesis; L-isoleucine biosynthesis; L-isoleucine from 2-oxobutanoate: step 2/4. It participates in amino-acid biosynthesis; L-valine biosynthesis; L-valine from pyruvate: step 2/4. Functionally, involved in the biosynthesis of branched-chain amino acids (BCAA). Catalyzes an alkyl-migration followed by a ketol-acid reduction of (S)-2-acetolactate (S2AL) to yield (R)-2,3-dihydroxy-isovalerate. In the isomerase reaction, S2AL is rearranged via a Mg-dependent methyl migration to produce 3-hydroxy-3-methyl-2-ketobutyrate (HMKB). In the reductase reaction, this 2-ketoacid undergoes a metal-dependent reduction by NADPH to yield (R)-2,3-dihydroxy-isovalerate. The chain is Ketol-acid reductoisomerase (NADP(+)) from Prochlorococcus marinus (strain MIT 9312).